The chain runs to 50 residues: Acidic phospholipase A2 1 (50 aa).

Residues Tyr27, Gly29, and Gly31 each coordinate Ca(2+). A disulfide bridge connects residues Cys28 and Cys44. His47 is a catalytic residue. A Ca(2+)-binding site is contributed by Asp48.

It belongs to the phospholipase A2 family. Group II subfamily. D49 sub-subfamily. In terms of assembly, monomer. Ca(2+) is required as a cofactor. As to expression, expressed by the venom gland.

It is found in the secreted. It carries out the reaction a 1,2-diacyl-sn-glycero-3-phosphocholine + H2O = a 1-acyl-sn-glycero-3-phosphocholine + a fatty acid + H(+). Functionally, snake venom phospholipase A2 (PLA2) that displays a potent enzymatic activity as measured by indirect hemolysis of red blood cells. Is neither lethal when injected into mice nor does it present anticoagulant activity. Displays a moderate inhibitory activity on the aggregation of platelets induced by low levels of ADP, thrombin and arachidonate. In contrast, strongly inhibits platelet aggregation induced by high doses of collagen. Shows myotoxic activity, increases the plasma creatine-kinase activity and induces edema and myonecrosis of mouse skeletal muscles. PLA2 catalyzes the calcium-dependent hydrolysis of the 2-acyl groups in 3-sn-phosphoglycerides. This Lachesis muta muta (Bushmaster) protein is Acidic phospholipase A2 1.